The sequence spans 351 residues: Phosphoribosylformylglycinamidine cyclo-ligase (351 aa).

Belongs to the AIR synthase family.

It is found in the cytoplasm. The catalysed reaction is 2-formamido-N(1)-(5-O-phospho-beta-D-ribosyl)acetamidine + ATP = 5-amino-1-(5-phospho-beta-D-ribosyl)imidazole + ADP + phosphate + H(+). Its pathway is purine metabolism; IMP biosynthesis via de novo pathway; 5-amino-1-(5-phospho-D-ribosyl)imidazole from N(2)-formyl-N(1)-(5-phospho-D-ribosyl)glycinamide: step 2/2. This chain is Phosphoribosylformylglycinamidine cyclo-ligase, found in Burkholderia pseudomallei (strain 668).